Consider the following 196-residue polypeptide: HTH-type transcriptional regulator EcpR (196 aa).

Residues 138-196 (KDIKKDKITDREMEIIRMTAQGMLPKSIARIENCSVKTVYTHRRNAEAKLYSKIYKLVP) form the HTH luxR-type domain. Residues 162 to 181 (PKSIARIENCSVKTVYTHRR) constitute a DNA-binding region (H-T-H motif).

Belongs to the EcpR/MatA family.

Its subcellular location is the cytoplasm. Functionally, part of the ecpRABCDE operon, which encodes the E.coli common pilus (ECP). ECP is found in both commensal and pathogenic strains and plays a dual role in early-stage biofilm development and host cell recognition. Positively regulates the expression of the ecp operon. This is HTH-type transcriptional regulator EcpR (ecpR) from Escherichia coli O17:K52:H18 (strain UMN026 / ExPEC).